The following is a 498-amino-acid chain: WD repeat-containing protein 55 homolog (498 aa).

The segment at 1 to 133 (MHTHNNFKTP…TFDLDEDDET (133 aa)) is disordered. Acidic residues-rich tracts occupy residues 12 to 23 (DEDELDDLDEDM), 31 to 48 (IEQEVLNESDSDNDEYDL), and 83 to 95 (SDSDDSMLDDAGD). Polar residues predominate over residues 114–123 (PSGSNRQSEA). WD repeat units lie at residues 155 to 194 (KLEDFITDICFHPDRDIIALATIIGDVHLYEYDNEANKLL), 199 to 238 (VHSKACRDVEFTEDGRFLLTCSKDKCVMVTDMETEKLKKL), 242 to 280 (AHDDAINTLHVLNENLFATGDDAGTVKLWDLRTKNAIFE), 283 to 322 (ELEDQITQLTTNDQSKLLLATSADGYLTTFNIAARKMYVQ), 325 to 364 (PYEEELSCMGIYRGDSKLVVGTSKGRLYTYNWGQFGYHCD), and 409 to 448 (QHNMPIESLDVNSNGELIASSSHNNDVRFWNVKYFEDFGD).

Belongs to the WD repeat WDR55 family.

This Drosophila erecta (Fruit fly) protein is WD repeat-containing protein 55 homolog.